The primary structure comprises 345 residues: Phosphoribosylformylglycinamidine cyclo-ligase (345 aa).

The protein belongs to the AIR synthase family.

The protein localises to the cytoplasm. It catalyses the reaction 2-formamido-N(1)-(5-O-phospho-beta-D-ribosyl)acetamidine + ATP = 5-amino-1-(5-phospho-beta-D-ribosyl)imidazole + ADP + phosphate + H(+). It participates in purine metabolism; IMP biosynthesis via de novo pathway; 5-amino-1-(5-phospho-D-ribosyl)imidazole from N(2)-formyl-N(1)-(5-phospho-D-ribosyl)glycinamide: step 2/2. The polypeptide is Phosphoribosylformylglycinamidine cyclo-ligase (Actinobacillus pleuropneumoniae serotype 5b (strain L20)).